A 109-amino-acid polypeptide reads, in one-letter code: Parvalbumin alpha (109 aa).

Ser1 is subject to N-acetylserine. EF-hand domains are found at residues 38–73 (KSDA…FSDG) and 77–109 (LNDK…AKMT). Ca(2+) contacts are provided by Asp51, Asp53, Ser55, Tyr57, Glu59, Glu62, Asp90, Asp92, Asp94, Lys96, and Glu101.

This sequence belongs to the parvalbumin family. As to quaternary structure, monomer.

In terms of biological role, in muscle, parvalbumin is thought to be involved in relaxation after contraction. It binds two calcium ions. The polypeptide is Parvalbumin alpha (Raja clavata (Thornback ray)).